Consider the following 481-residue polypeptide: Sialic acid-binding Ig-like lectin 16 (481 aa).

Positions 1 to 16 (MLLLPLLLPVLGAGSL) are cleaved as a signal peptide. Residues 17–434 (NKDPSYSLQV…VHCKSGPMTG (418 aa)) are Extracellular-facing. The Ig-like V-type domain occupies 19–122 (DPSYSLQVQR…DEAWYFFRVE (104 aa)). 4 disulfides stabilise this stretch: cysteine 37–cysteine 174, cysteine 42–cysteine 102, cysteine 165–cysteine 216, and cysteine 259–cysteine 306. N-linked (GlcNAc...) asparagine glycosylation is found at asparagine 43 and asparagine 78. Arginine 120 is an N-acetylneuraminate binding site. 3 Ig-like C2-type domains span residues 147-232 (PDVY…RTVR), 238-322 (LELQ…LDLS), and 327-424 (PENL…LSFS). 2 N-linked (GlcNAc...) asparagine glycosylation sites follow: asparagine 338 and asparagine 347. A disulfide bridge connects residues cysteine 363 and cysteine 408. A helical membrane pass occupies residues 435 to 455 (VVLVAVGEVAMKILLLCLCLI). Topologically, residues 456 to 481 (LLRVRSCRRKAARAALGMEAADAVTD) are cytoplasmic.

Belongs to the immunoglobulin superfamily. SIGLEC (sialic acid binding Ig-like lectin) family. As to expression, expressed in bone marrow, fetal brain, fetal liver, lung and salivary gland. Detected in brain, macrophage, cancerous esophagus and lung at protein level.

It localises to the membrane. Putative adhesion molecule that mediates sialic-acid dependent binding to cells. The sequence is that of Sialic acid-binding Ig-like lectin 16 (SIGLEC16) from Homo sapiens (Human).